Consider the following 240-residue polypeptide: 2,3,4,5-tetrahydropyridine-2,6-dicarboxylate N-acetyltransferase (240 aa).

Belongs to the transferase hexapeptide repeat family. DapH subfamily.

The catalysed reaction is (S)-2,3,4,5-tetrahydrodipicolinate + acetyl-CoA + H2O = L-2-acetamido-6-oxoheptanedioate + CoA. It participates in amino-acid biosynthesis; L-lysine biosynthesis via DAP pathway; LL-2,6-diaminopimelate from (S)-tetrahydrodipicolinate (acetylase route): step 1/3. Its function is as follows. Catalyzes the transfer of an acetyl group from acetyl-CoA to tetrahydrodipicolinate. This chain is 2,3,4,5-tetrahydropyridine-2,6-dicarboxylate N-acetyltransferase, found in Bacillus cereus (strain AH187).